Here is a 430-residue protein sequence, read N- to C-terminus: Adenylosuccinate synthetase (430 aa).

GTP is bound by residues Gly12–Lys18 and Gly40–Thr42. Catalysis depends on Asp13, which acts as the Proton acceptor. Residues Asp13 and Gly40 each contribute to the Mg(2+) site. Residues Asp13 to Lys16, Asn38 to His41, Thr128, Arg142, Gln223, Thr238, and Arg302 each bind IMP. The active-site Proton donor is the His41. Residue Thr298–Arg304 participates in substrate binding. GTP contacts are provided by residues Arg304, Cys330–Asp332, and Ser412–Gly414.

Belongs to the adenylosuccinate synthetase family. Homodimer. Mg(2+) serves as cofactor.

Its subcellular location is the cytoplasm. It catalyses the reaction IMP + L-aspartate + GTP = N(6)-(1,2-dicarboxyethyl)-AMP + GDP + phosphate + 2 H(+). It functions in the pathway purine metabolism; AMP biosynthesis via de novo pathway; AMP from IMP: step 1/2. Its function is as follows. Plays an important role in the de novo pathway of purine nucleotide biosynthesis. Catalyzes the first committed step in the biosynthesis of AMP from IMP. The polypeptide is Adenylosuccinate synthetase (Streptococcus thermophilus (strain CNRZ 1066)).